Reading from the N-terminus, the 276-residue chain is Ribosomal RNA small subunit methyltransferase A (276 aa).

6 residues coordinate S-adenosyl-L-methionine: His15, Leu17, Gly42, Glu64, Asp89, and Asn108.

It belongs to the class I-like SAM-binding methyltransferase superfamily. rRNA adenine N(6)-methyltransferase family. RsmA subfamily.

Its subcellular location is the cytoplasm. The enzyme catalyses adenosine(1518)/adenosine(1519) in 16S rRNA + 4 S-adenosyl-L-methionine = N(6)-dimethyladenosine(1518)/N(6)-dimethyladenosine(1519) in 16S rRNA + 4 S-adenosyl-L-homocysteine + 4 H(+). Functionally, specifically dimethylates two adjacent adenosines (A1518 and A1519) in the loop of a conserved hairpin near the 3'-end of 16S rRNA in the 30S particle. May play a critical role in biogenesis of 30S subunits. This is Ribosomal RNA small subunit methyltransferase A from Prochlorococcus marinus (strain MIT 9515).